The following is a 217-amino-acid chain: ATP-dependent Clp protease proteolytic subunit (217 aa).

The active-site Nucleophile is S119. Residue H144 is part of the active site.

The protein belongs to the peptidase S14 family. As to quaternary structure, fourteen ClpP subunits assemble into 2 heptameric rings which stack back to back to give a disk-like structure with a central cavity, resembling the structure of eukaryotic proteasomes.

The protein resides in the cytoplasm. It catalyses the reaction Hydrolysis of proteins to small peptides in the presence of ATP and magnesium. alpha-casein is the usual test substrate. In the absence of ATP, only oligopeptides shorter than five residues are hydrolyzed (such as succinyl-Leu-Tyr-|-NHMec, and Leu-Tyr-Leu-|-Tyr-Trp, in which cleavage of the -Tyr-|-Leu- and -Tyr-|-Trp bonds also occurs).. In terms of biological role, cleaves peptides in various proteins in a process that requires ATP hydrolysis. Has a chymotrypsin-like activity. Plays a major role in the degradation of misfolded proteins. This Bordetella petrii (strain ATCC BAA-461 / DSM 12804 / CCUG 43448) protein is ATP-dependent Clp protease proteolytic subunit.